The primary structure comprises 230 residues: 2,3-bisphosphoglycerate-dependent phosphoglycerate mutase 2 (230 aa).

Substrate-binding positions include 8–15 (RHGQSEWN), 21–22 (TG), R60, 87–90 (ERHY), K98, 114–115 (RR), and 183–184 (GN). The active-site Tele-phosphohistidine intermediate is the H9. Catalysis depends on E87, which acts as the Proton donor/acceptor.

It belongs to the phosphoglycerate mutase family. BPG-dependent PGAM subfamily.

It carries out the reaction (2R)-2-phosphoglycerate = (2R)-3-phosphoglycerate. It functions in the pathway carbohydrate degradation; glycolysis; pyruvate from D-glyceraldehyde 3-phosphate: step 3/5. Functionally, catalyzes the interconversion of 2-phosphoglycerate and 3-phosphoglycerate. In Lactiplantibacillus plantarum (strain ATCC BAA-793 / NCIMB 8826 / WCFS1) (Lactobacillus plantarum), this protein is 2,3-bisphosphoglycerate-dependent phosphoglycerate mutase 2.